The primary structure comprises 278 residues: Large ribosomal subunit protein uL2 (278 aa).

Residues 222-264 (RGVAMNPVDHPHGGGEGRTSGGRNPVTPWGVPTKGKKTRSNKR) are disordered.

The protein belongs to the universal ribosomal protein uL2 family. Part of the 50S ribosomal subunit. Forms a bridge to the 30S subunit in the 70S ribosome.

Its function is as follows. One of the primary rRNA binding proteins. Required for association of the 30S and 50S subunits to form the 70S ribosome, for tRNA binding and peptide bond formation. It has been suggested to have peptidyltransferase activity; this is somewhat controversial. Makes several contacts with the 16S rRNA in the 70S ribosome. This chain is Large ribosomal subunit protein uL2, found in Methylobacterium radiotolerans (strain ATCC 27329 / DSM 1819 / JCM 2831 / NBRC 15690 / NCIMB 10815 / 0-1).